Here is a 627-residue protein sequence, read N- to C-terminus: DNA mismatch repair protein MutL (627 aa).

Basic and acidic residues predominate over residues 354–364 (DEKPPEKKVPE). The disordered stretch occupies residues 354-374 (DEKPPEKKVPEKSTAPSYSPM).

The protein belongs to the DNA mismatch repair MutL/HexB family.

Its function is as follows. This protein is involved in the repair of mismatches in DNA. It is required for dam-dependent methyl-directed DNA mismatch repair. May act as a 'molecular matchmaker', a protein that promotes the formation of a stable complex between two or more DNA-binding proteins in an ATP-dependent manner without itself being part of a final effector complex. Overexpression of mutSL partially suppresses the high spontaneous mutation frequency of a ytkD/mutM/mutY triple disruption which lacks the system required to prevent damage by oxidized guanine (8-oxo-dGTP). This suggests that MutSL also functions to repair mismatches due to oxidative stress in both growing and stationary phase cells. This Bacillus subtilis (strain 168) protein is DNA mismatch repair protein MutL.